Consider the following 493-residue polypeptide: Ribose import ATP-binding protein RbsA (493 aa).

ABC transporter domains are found at residues leucine 5–arginine 241 and glutamate 252–isoleucine 491. Glycine 37–serine 44 is an ATP binding site.

Belongs to the ABC transporter superfamily. Ribose importer (TC 3.A.1.2.1) family. As to quaternary structure, the complex is composed of an ATP-binding protein (RbsA), two transmembrane proteins (RbsC) and a solute-binding protein (RbsB).

It localises to the cell inner membrane. The catalysed reaction is D-ribose(out) + ATP + H2O = D-ribose(in) + ADP + phosphate + H(+). Its function is as follows. Part of the ABC transporter complex RbsABC involved in ribose import. Responsible for energy coupling to the transport system. The polypeptide is Ribose import ATP-binding protein RbsA (Haemophilus influenzae (strain 86-028NP)).